The chain runs to 276 residues: Formamidopyrimidine-DNA glycosylase (276 aa).

Catalysis depends on proline 2, which acts as the Schiff-base intermediate with DNA. The active-site Proton donor is the glutamate 3. Lysine 60 serves as the catalytic Proton donor; for beta-elimination activity. DNA contacts are provided by histidine 93 and arginine 112. An FPG-type zinc finger spans residues 240–274; that stretch reads HVYGRKQQPCHHCDTAIEKTVVGGRGTHYCPNCQP. Catalysis depends on arginine 264, which acts as the Proton donor; for delta-elimination activity.

The protein belongs to the FPG family. Monomer. It depends on Zn(2+) as a cofactor.

It carries out the reaction Hydrolysis of DNA containing ring-opened 7-methylguanine residues, releasing 2,6-diamino-4-hydroxy-5-(N-methyl)formamidopyrimidine.. The catalysed reaction is 2'-deoxyribonucleotide-(2'-deoxyribose 5'-phosphate)-2'-deoxyribonucleotide-DNA = a 3'-end 2'-deoxyribonucleotide-(2,3-dehydro-2,3-deoxyribose 5'-phosphate)-DNA + a 5'-end 5'-phospho-2'-deoxyribonucleoside-DNA + H(+). Its function is as follows. Involved in base excision repair of DNA damaged by oxidation or by mutagenic agents. Acts as a DNA glycosylase that recognizes and removes damaged bases. Has a preference for oxidized purines, such as 7,8-dihydro-8-oxoguanine (8-oxoG). Has AP (apurinic/apyrimidinic) lyase activity and introduces nicks in the DNA strand. Cleaves the DNA backbone by beta-delta elimination to generate a single-strand break at the site of the removed base with both 3'- and 5'-phosphates. This Shouchella clausii (strain KSM-K16) (Alkalihalobacillus clausii) protein is Formamidopyrimidine-DNA glycosylase.